The primary structure comprises 230 residues: 2,3-bisphosphoglycerate-dependent phosphoglycerate mutase (230 aa).

Residues 8-15, 21-22, arginine 60, 87-90, lysine 98, 114-115, and 183-184 each bind substrate; these read RHGESEWN, TG, ERHY, RR, and GN. The active-site Tele-phosphohistidine intermediate is the histidine 9. Glutamate 87 (proton donor/acceptor) is an active-site residue.

It belongs to the phosphoglycerate mutase family. BPG-dependent PGAM subfamily.

The catalysed reaction is (2R)-2-phosphoglycerate = (2R)-3-phosphoglycerate. It participates in carbohydrate degradation; glycolysis; pyruvate from D-glyceraldehyde 3-phosphate: step 3/5. Its function is as follows. Catalyzes the interconversion of 2-phosphoglycerate and 3-phosphoglycerate. This chain is 2,3-bisphosphoglycerate-dependent phosphoglycerate mutase, found in Streptococcus uberis (strain ATCC BAA-854 / 0140J).